The chain runs to 274 residues: 2,3,4,5-tetrahydropyridine-2,6-dicarboxylate N-succinyltransferase (274 aa).

Substrate-binding residues include Arg106 and Asp143.

It belongs to the transferase hexapeptide repeat family. As to quaternary structure, homotrimer.

Its subcellular location is the cytoplasm. The enzyme catalyses (S)-2,3,4,5-tetrahydrodipicolinate + succinyl-CoA + H2O = (S)-2-succinylamino-6-oxoheptanedioate + CoA. The protein operates within amino-acid biosynthesis; L-lysine biosynthesis via DAP pathway; LL-2,6-diaminopimelate from (S)-tetrahydrodipicolinate (succinylase route): step 1/3. This is 2,3,4,5-tetrahydropyridine-2,6-dicarboxylate N-succinyltransferase from Rickettsia prowazekii (strain Madrid E).